The sequence spans 147 residues: Hemoglobin subunit beta (147 aa).

The residue at position 2 (V2) is an N-acetylvaline. Positions 3–147 (HLSAEEKGHI…VATALAHKYH (145 aa)) constitute a Globin domain. At K60 the chain carries N6-acetyllysine. Position 64 (H64) interacts with heme b. Position 83 is an N6-acetyllysine (K83). Position 93 (H93) interacts with heme b. C94 carries the post-translational modification S-nitrosocysteine. Position 145 is an N6-acetyllysine (K145).

This sequence belongs to the globin family. In terms of assembly, heterotetramer of two alpha chains and two beta chains. Red blood cells.

Its function is as follows. Involved in oxygen transport from the lung to the various peripheral tissues. This Sminthopsis crassicaudata (Fat-tailed dunnart) protein is Hemoglobin subunit beta (HBB).